Consider the following 667-residue polypeptide: WD repeat-containing protein 48 homolog (667 aa).

WD repeat units lie at residues 26–65 (QHRN…NEKY), 71–110 (HHND…CMST), 113–152 (THRD…ALTA), 164–203 (GSKD…RSMK), 206–245 (GHTE…CVQT), 248–287 (VHKE…NKML), 290–329 (EEQA…RCTL), and 350–389 (KGGA…KKEQ). The disordered stretch occupies residues 591–615 (ETTPSGGNANNSLQNSQSDANSEGS).

The protein belongs to the WD repeat WDR48 family. As to quaternary structure, catalytic component of the Usp12-46 deubiquitylase complex consisting of Usp12-46, Wdr20 and Uaf1; regulatory subunit that, together wtih Wdr20, stabilizes Usp12-46. The Usp12-46 deubiquitylase complex associates with arr/arrow; the interaction leads to deubiquitination and stabilization of arr/arrow.

Its function is as follows. Regulatory component of the Usp12-46 deubiquitylase complex. activates deubiquitination by increasing the catalytic turnover without increasing the affinity of deubiquitinating enzymes for the substrate. The complex deubiquitylates the wg/wingless-signaling receptor arr/arrow, which stabilizes the receptor and increases its concentration at the cell surface; this enhances the sensitivity of cells to wg/wingless-signal stimulation. This increases the amplitude and spatial range of the signaling response to the wg/wingless morphogen gradient, facilitating the precise concentration-dependent regulation of its target genes. Together with Wdr20 and Usp12-46 required for wg/wingless-mediated signaling in the wing imaginal disc and for wg/wingless-dependent regulation of intestinal stem cell proliferation. This Drosophila ananassae (Fruit fly) protein is WD repeat-containing protein 48 homolog.